Here is a 121-residue protein sequence, read N- to C-terminus: Large ribosomal subunit protein uL22c (121 aa).

This sequence belongs to the universal ribosomal protein uL22 family. In terms of assembly, part of the 50S ribosomal subunit.

The protein resides in the plastid. Its subcellular location is the chloroplast. Functionally, this protein binds specifically to 23S rRNA. In terms of biological role, the globular domain of the protein is located near the polypeptide exit tunnel on the outside of the subunit, while an extended beta-hairpin is found that lines the wall of the exit tunnel in the center of the 70S ribosome. The polypeptide is Large ribosomal subunit protein uL22c (rpl22) (Welwitschia mirabilis (Tree tumbo)).